The sequence spans 339 residues: Fructose-1,6-bisphosphatase isozyme 2 (339 aa).

The interval 3–10 (DRSPFETD) is important for interaction with ALDOA. AMP is bound by residues Val18 and 28 to 32 (TGELT). Mg(2+)-binding residues include Asp69 and Glu98. 113–114 (KY) is a binding site for AMP. 3 residues coordinate Mg(2+): Asp119, Leu121, and Asp122. Asp122 is a binding site for substrate. Arg141 contacts AMP. Residues 204–208 (KKKGK) carry the Nuclear localization signal motif. 213 to 216 (NEGY) serves as a coordination point for substrate. A phosphotyrosine mark is found at Tyr216 and Tyr219. Substrate-binding positions include 245-249 (YVGSM), Tyr265, and Lys275. Glu281 lines the Mg(2+) pocket.

It belongs to the FBPase class 1 family. In terms of assembly, homotetramer. Interacts with ALDOA; the interaction blocks inhibition by physiological concentrations of AMP and reduces inhibition by Ca(2+). Interacts with alpha-actinin and F-actin. Requires Mg(2+) as cofactor.

The protein localises to the cell junction. The protein resides in the cytoplasm. It localises to the nucleus. Its subcellular location is the myofibril. It is found in the sarcomere. The protein localises to the z line. It catalyses the reaction beta-D-fructose 1,6-bisphosphate + H2O = beta-D-fructose 6-phosphate + phosphate. The protein operates within carbohydrate biosynthesis; gluconeogenesis. Its activity is regulated as follows. Subject to complex allosteric regulation. The enzyme can assume an active R-state, or an inactive T-state. Intermediate conformations may exist. AMP acts as an allosteric inhibitor. Fructose 2,6-bisphosphate acts as a competitive inhibitor. Strongly inhibited by Ca(2+). Catalyzes the hydrolysis of fructose 1,6-bisphosphate to fructose 6-phosphate in the presence of divalent cations and probably participates in glycogen synthesis from carbohydrate precursors, such as lactate. The sequence is that of Fructose-1,6-bisphosphatase isozyme 2 (Fbp2) from Rattus norvegicus (Rat).